The sequence spans 466 residues: Dynein axonemal assembly factor 11 (466 aa).

LRR repeat units lie at residues 22–43 (SLEE…DKWC), 45–66 (DLKI…SKLK), 67–88 (KLEY…EGCE), and 89–110 (ELAK…KNLQ). Positions 123-161 (NPCASFDHYREFVVATLPQLKWLDGKEIEPSERIKALQD) constitute an LRRCT domain. Residues 178–204 (LKRAKLKEEAQRKHQEEDKNEDKRSNA) are a coiled coil. The segment covering 185–202 (EEAQRKHQEEDKNEDKRS) has biased composition (basic and acidic residues). Disordered regions lie at residues 185–206 (EEAQ…NAGF), 268–288 (MEKQ…VKPP), and 391–466 (AFKS…PPLI). The span at 269-287 (EKQRKKQEKLSEKKKKVKP) shows a compositional bias: basic residues. The 96-residue stretch at 301–396 (VNEPKIDFSL…GGQRAFKSMK (96 aa)) folds into the CS domain. 2 stretches are compositionally biased toward basic and acidic residues: residues 398-425 (TSDR…KHSF) and 433-445 (QEKK…RPEP). The segment covering 450 to 460 (SEEDPTFEDNP) has biased composition (acidic residues).

The protein belongs to the tilB family. In terms of assembly, interacts (via CS domain) with ZMYND10 (via C-terminus). In terms of tissue distribution, expressed predominantly in testis and in nasal epithelial cells.

It is found in the cytoplasm. The protein resides in the cell projection. Its subcellular location is the cilium. The protein localises to the dynein axonemal particle. It localises to the flagellum. Involved in dynein arm assembly, is important for expression and transporting outer dynein arm (ODA) proteins from the cytoplasm to the cilia. Acts as a crucial component in the formation and motility of spermatozoal flagella. This chain is Dynein axonemal assembly factor 11, found in Homo sapiens (Human).